The primary structure comprises 201 residues: Lymphocyte antigen 6 complex locus protein G5b (201 aa).

The signal sequence occupies residues methionine 1–glycine 18. Positions arginine 26–glutamate 118 constitute a UPAR/Ly6 domain. 5 cysteine pairs are disulfide-bonded: cysteine 28-cysteine 55, cysteine 31-cysteine 40, cysteine 47-cysteine 73, cysteine 81-cysteine 98, and cysteine 99-cysteine 104. N-linked (GlcNAc...) asparagine glycans are attached at residues asparagine 141 and asparagine 183.

Forms oligomer. Post-translationally, N-glycosylated.

It is found in the secreted. In Homo sapiens (Human), this protein is Lymphocyte antigen 6 complex locus protein G5b (LY6G5B).